Consider the following 370-residue polypeptide: Homoserine O-acetyltransferase (370 aa).

The AB hydrolase-1 domain occupies 44 to 350; the sequence is NAILVAHAWT…AYGHDAFLLE (307 aa). Residue Ser-150 is the Nucleophile of the active site. Arg-217 provides a ligand contact to substrate. Active-site residues include Asp-311 and His-344. Asp-345 lines the substrate pocket.

Belongs to the AB hydrolase superfamily. MetX family. In terms of assembly, homodimer.

The protein localises to the cytoplasm. It carries out the reaction L-homoserine + acetyl-CoA = O-acetyl-L-homoserine + CoA. It functions in the pathway amino-acid biosynthesis; L-methionine biosynthesis via de novo pathway; O-acetyl-L-homoserine from L-homoserine: step 1/1. Its function is as follows. Transfers an acetyl group from acetyl-CoA to L-homoserine, forming acetyl-L-homoserine. The sequence is that of Homoserine O-acetyltransferase from Geotalea uraniireducens (strain Rf4) (Geobacter uraniireducens).